A 282-amino-acid polypeptide reads, in one-letter code: Transcription factor BC1 (282 aa).

The tract at residues 34 to 123 (TTAPAIPEDA…ATDSHSLAER (90 aa)) is disordered. Polar residues predominate over residues 45-55 (METSSVVLDTS). Over residues 75–84 (HSKEAKENGR) the composition is skewed to basic and acidic residues. The Nuclear localization signal signature appears at 109–116 (ARRGQATD). Positions 113 to 126 (QATDSHSLAERVRR) are basic motif; degenerate. The bHLH domain maps to 113–163 (QATDSHSLAERVRRERISERMRMLQALVPGCDKVTGKALILDEIINYVQSL). The helix-loop-helix motif stretch occupies residues 127 to 163 (ERISERMRMLQALVPGCDKVTGKALILDEIINYVQSL). The segment at 219–251 (PAQSHAIMDTSNTSPTPYTLQVQGGSNNNSLSQ) is disordered.

It belongs to the bHLH protein family. Homodimer. Component of a nuclear cell elongation controlling complex made of ILI5/BUL1, LO9-177 and BC1. Interacts with ILI5/BUL1 only in the presence of LO9-177. Interacts with IBH1. Binds to LO9-177 in the nucleus. Interacts with BCL1. As to expression, preferentially present in anthers and leaves lamina joints. Expressed in seedlings, leaves sheaths, collars and panicles.

It is found in the nucleus. Transcription activator that contributes, together with LO9-177 and ILI5/BUL1, to the promotion of leaf inclination and grain size by modulating cell elongation. Involved in the RLI1-dependent modulation of leaf inclination by promoting lamina joint cell elongation, especially in response to phosphate (Pi) availability. The protein is Transcription factor BC1 of Oryza sativa subsp. japonica (Rice).